A 290-amino-acid polypeptide reads, in one-letter code: Transposon Ty3-G Gag polyprotein (290 aa).

Serine 2 carries the N-acetylserine modification. A CCHC-type zinc finger spans residues 265-282 (RLCFYCKKEGHRLNECRA).

It is found in the cytoplasm. Capsid protein (CA) is the structural component of the virus-like particle (VLP), forming the shell that encapsulates the retrotransposons dimeric RNA genome. Its function is as follows. Nucleocapsid protein p9 (NC) forms the nucleocore that coats the retro-elements dimeric RNA. Binds these RNAs through its zinc fingers. Promotes primer tRNA(i)-Met annealing to the multipartite primer-binding site (PBS), dimerization of Ty3 RNA and initiation of reverse transcription. This is Transposon Ty3-G Gag polyprotein (TY3A-G) from Saccharomyces cerevisiae (strain ATCC 204508 / S288c) (Baker's yeast).